We begin with the raw amino-acid sequence, 340 residues long: Glycerol-3-phosphate dehydrogenase [NAD(P)+] (340 aa).

NADPH-binding residues include S13, Y14, and K108. K108, G137, and T139 together coordinate sn-glycerol 3-phosphate. An NADPH-binding site is contributed by A141. Sn-glycerol 3-phosphate is bound by residues K193, D246, S256, R257, and N258. Catalysis depends on K193, which acts as the Proton acceptor. R257 lines the NADPH pocket. NADPH-binding residues include I281 and E283.

It belongs to the NAD-dependent glycerol-3-phosphate dehydrogenase family.

The protein localises to the cytoplasm. It carries out the reaction sn-glycerol 3-phosphate + NAD(+) = dihydroxyacetone phosphate + NADH + H(+). It catalyses the reaction sn-glycerol 3-phosphate + NADP(+) = dihydroxyacetone phosphate + NADPH + H(+). It functions in the pathway membrane lipid metabolism; glycerophospholipid metabolism. Functionally, catalyzes the reduction of the glycolytic intermediate dihydroxyacetone phosphate (DHAP) to sn-glycerol 3-phosphate (G3P), the key precursor for phospholipid synthesis. This chain is Glycerol-3-phosphate dehydrogenase [NAD(P)+], found in Bartonella henselae (strain ATCC 49882 / DSM 28221 / CCUG 30454 / Houston 1) (Rochalimaea henselae).